Reading from the N-terminus, the 269-residue chain is Surfeit locus protein 4 (269 aa).

6 consecutive transmembrane segments (helical) span residues F64–V84, Y92–W112, M157–M177, F179–F199, L203–W223, and T242–M262. The short motif at K266–W269 is the Di-lysine motif element.

The protein belongs to the SURF4 family.

It is found in the endoplasmic reticulum membrane. It localises to the endoplasmic reticulum-Golgi intermediate compartment membrane. Its subcellular location is the golgi apparatus membrane. Functionally, endoplasmic reticulum cargo receptor that mediates the export of lipoproteins by recruiting cargos into COPII vesicles to facilitate their secretion. Acts as a cargo receptor for lipoproteins bearing both APOB and APOA1, thereby regulating lipoprotein delivery and the maintenance of lipid homeostasis. This Gallus gallus (Chicken) protein is Surfeit locus protein 4.